The following is a 253-amino-acid chain: Anamorsin homolog (253 aa).

The interval 4–129 is N-terminal SAM-like domain; the sequence is FKGLQKSLYI…ETGSSARLSF (126 aa). The tract at residues 130-161 is linker; sequence AKKNSSTLNVWKISGDDDELIDEEDLLDEVDK. Residues cysteine 172, cysteine 181, cysteine 184, and cysteine 186 each coordinate [2Fe-2S] cluster. The interval 172–186 is fe-S binding site A; that stretch reads CSTTGKRKACKNCSC. The [4Fe-4S] cluster site is built by cysteine 214, cysteine 217, cysteine 225, and cysteine 228. 2 consecutive short sequence motifs (cx2C motif) follow at residues 214-217 and 225-228; these read CGNC and CSSC. Residues 214 to 228 are fe-S binding site B; sequence CGNCYLGDAFRCSSC.

It belongs to the anamorsin family. Monomer. The cofactor is [2Fe-2S] cluster. Requires [4Fe-4S] cluster as cofactor.

The protein resides in the cytoplasm. It localises to the mitochondrion intermembrane space. Component of the cytosolic iron-sulfur (Fe-S) protein assembly (CIA) machinery. Required for the maturation of extramitochondrial Fe-S proteins. Part of an electron transfer chain functioning in an early step of cytosolic Fe-S biogenesis, facilitating the de novo assembly of a [4Fe-4S] cluster on the cytosolic Fe-S scaffold complex. Electrons are transferred from NADPH via a FAD- and FMN-containing diflavin oxidoreductase. Together with the diflavin oxidoreductase, also required for the assembly of the diferric tyrosyl radical cofactor of ribonucleotide reductase (RNR), probably by providing electrons for reduction during radical cofactor maturation in the catalytic small subunit. This chain is Anamorsin homolog, found in Drosophila willistoni (Fruit fly).